Consider the following 323-residue polypeptide: Transcription factor MafB (323 aa).

Lysine 32 participates in a covalent cross-link: Glycyl lysine isopeptide (Lys-Gly) (interchain with G-Cter in SUMO). Residues 34 to 43 show a composition bias toward basic and acidic residues; the sequence is EPLGRAERPG. Disordered regions lie at residues 34–78 and 116–210; these read EPLG…PTEQ and PVPQ…VEDR. The segment covering 54 to 76 has biased composition (low complexity); the sequence is SLSSTPLSTPCSSVPSSPSFSPT. Composition is skewed to basic residues over residues 129-143 and 159-168; these read GAHH…HPHH and AHPHHHHHHQ. Residues 192–201 show a composition bias toward low complexity; it reads PHATASATAA. The basic motif stretch occupies residues 238-263; it reads RLKQKRRTLKNRGYAQSCRYKRVQQK. Residues 238–301 form the bZIP domain; the sequence is RLKQKRRTLK…DAHKVKCEKL (64 aa). The interval 266-287 is leucine-zipper; sequence LENEKTQLIQQVEQLKQEVSRL. Residue lysine 297 forms a Glycyl lysine isopeptide (Lys-Gly) (interchain with G-Cter in SUMO) linkage.

This sequence belongs to the bZIP family. Maf subfamily. In terms of assembly, homodimer or heterodimer with other bHLH-Zip transcription factors. Binds DNA as a homodimer or a heterodimer. Forms homodimers and heterodimers with FOS, FOSB and FOSL2, but not with JUN proteins (JUN, JUNB and JUND). Interacts with PAX6; the interaction is direct. Interacts with ETS1 and LRP1. Interacts with the intracellular cytoplasmic domain of LRP1 (LRPICD); the interaction results in a moderate reduction of MAFB transcriptional potential. Post-translationally, sumoylated. Sumoylation on Lys-32 and Lys-297 stimulates its transcriptional repression activity and promotes macrophage differentiation from myeloid progenitors.

Its subcellular location is the nucleus. Functionally, acts as a transcriptional activator or repressor. Plays a pivotal role in regulating lineage-specific hematopoiesis by repressing ETS1-mediated transcription of erythroid-specific genes in myeloid cells. Required for monocytic, macrophage, osteoclast, podocyte and islet beta cell differentiation. Involved in renal tubule survival and F4/80 maturation. Activates the insulin and glucagon promoters. Together with PAX6, transactivates weakly the glucagon gene promoter through the G1 element. SUMO modification controls its transcriptional activity and ability to specify macrophage fate. Binds element G1 on the glucagon promoter. Involved either as an oncogene or as a tumor suppressor, depending on the cell context. Required for the transcriptional activation of HOXB3 in the rhombomere r5 in the hindbrain. This chain is Transcription factor MafB (MAFB), found in Macaca fascicularis (Crab-eating macaque).